The following is a 202-amino-acid chain: Urease accessory protein UreG (202 aa).

11–18 is a GTP binding site; that stretch reads GPVGSGKT.

This sequence belongs to the SIMIBI class G3E GTPase family. UreG subfamily. Homodimer. UreD, UreF and UreG form a complex that acts as a GTP-hydrolysis-dependent molecular chaperone, activating the urease apoprotein by helping to assemble the nickel containing metallocenter of UreC. The UreE protein probably delivers the nickel.

The protein resides in the cytoplasm. Facilitates the functional incorporation of the urease nickel metallocenter. This process requires GTP hydrolysis, probably effectuated by UreG. This Magnetococcus marinus (strain ATCC BAA-1437 / JCM 17883 / MC-1) protein is Urease accessory protein UreG.